A 365-amino-acid polypeptide reads, in one-letter code: Mitogen-activated protein kinase HOG1 (365 aa).

In terms of domain architecture, Protein kinase spans 20-306 (YSDLQPVGMG…ATNALAHEYL (287 aa)). Residues 26–34 (VGMGAFGLV) and Lys49 contribute to the ATP site. Catalysis depends on Asp148, which acts as the Proton acceptor. The TXY signature appears at 178–180 (TGY).

Belongs to the protein kinase superfamily. Ser/Thr protein kinase family. MAP kinase subfamily. HOG1 sub-subfamily. Mg(2+) serves as cofactor.

Its subcellular location is the cytoplasm. The protein localises to the nucleus. It catalyses the reaction L-seryl-[protein] + ATP = O-phospho-L-seryl-[protein] + ADP + H(+). The catalysed reaction is L-threonyl-[protein] + ATP = O-phospho-L-threonyl-[protein] + ADP + H(+). Proline-directed serine/threonine-protein kinase involved in a signal transduction pathway that is activated by changes in the osmolarity of the extracellular environment. Controls osmotic regulation of transcription of target genes. Involved in environmental stress response, hyphal growth, conidiation and possibly secondary metabolism such as ustiloxin biosynthesis or the biosynthesis of other phytotoxic compounds that are inhibitory to rice shoot growth during seed germination. Plays a key role in responses to cell wall and membrane stresses but not oxidative stress. This Ustilaginoidea virens (Rice false smut fungus) protein is Mitogen-activated protein kinase HOG1.